The following is a 90-amino-acid chain: [Phe8]-phyllolitorin (90 aa).

Residues 1-30 form the signal peptide; sequence MSAVPFTRVLLISGFLAHLLLSTFVTLTVC. A propeptide spanning residues 31–48 is cleaved from the precursor; it reads KEVTEESDDLSKRNVLQR. Pyrrolidone carboxylic acid is present on Q49. M57 is subject to Methionine amide. A propeptide spanning residues 61 to 90 is cleaved from the precursor; that stretch reads SLENTNRRSDEDMEISALFRGSPLKVKRSD.

The protein belongs to the bombesin/neuromedin-B/ranatensin family. As to expression, expressed by the skin glands.

The protein localises to the secreted. This is [Phe8]-phyllolitorin from Phyllomedusa sauvagei (Sauvage's leaf frog).